Consider the following 263-residue polypeptide: (2Z,6E)-farnesyl diphosphate synthase (263 aa).

Asp40 is an active-site residue. Asp40 lines the Mg(2+) pocket. Substrate is bound by residues 41–44 (GNRR), Trp45, and 86–88 (STE). Catalysis depends on Asn89, which acts as the Proton acceptor. Substrate contacts are provided by residues Arg92, Arg212, and 218–220 (RLS). Glu231 lines the Mg(2+) pocket.

This sequence belongs to the UPP synthase family. Z-FPP synthase subfamily. Homodimer. Requires Mg(2+) as cofactor.

It is found in the cell membrane. It carries out the reaction isopentenyl diphosphate + (2E)-geranyl diphosphate = (2Z,6E)-farnesyl diphosphate + diphosphate. In terms of biological role, catalyzes the condensation of only one isopentenyl pyrophosphate (IPP) unit in the cis configuration to E-geranyl diphosphate (E-GPP) generating the 15 carbon product (2Z,6E)-farnesyl diphosphate (Z-FPP or EZ-FPP). Z-FPP is the precursor of decaprenyl diphosphate, which has a central role in the biosynthesis of the mycobacterial cell wall. The protein is (2Z,6E)-farnesyl diphosphate synthase (uppS) of Mycolicibacterium smegmatis (strain ATCC 700084 / mc(2)155) (Mycobacterium smegmatis).